Here is a 320-residue protein sequence, read N- to C-terminus: Transaldolase (320 aa).

The active-site Schiff-base intermediate with substrate is the Lys135.

It belongs to the transaldolase family. Type 1 subfamily. As to quaternary structure, homodimer.

Its subcellular location is the cytoplasm. The catalysed reaction is D-sedoheptulose 7-phosphate + D-glyceraldehyde 3-phosphate = D-erythrose 4-phosphate + beta-D-fructose 6-phosphate. It participates in carbohydrate degradation; pentose phosphate pathway; D-glyceraldehyde 3-phosphate and beta-D-fructose 6-phosphate from D-ribose 5-phosphate and D-xylulose 5-phosphate (non-oxidative stage): step 2/3. Functionally, transaldolase is important for the balance of metabolites in the pentose-phosphate pathway. This Colwellia psychrerythraea (strain 34H / ATCC BAA-681) (Vibrio psychroerythus) protein is Transaldolase.